Here is a 103-residue protein sequence, read N- to C-terminus: Gene 56 protein (103 aa).

A Glutaredoxin domain is found at 9-103 (WDGAHVRTLF…DYYTASETGL (95 aa)).

This chain is Gene 56 protein (56), found in Mycobacterium phage L5 (Mycobacteriophage L5).